Here is a 394-residue protein sequence, read N- to C-terminus: Elongation factor Tu (394 aa).

The tr-type G domain occupies 10-204; the sequence is KPHVNVGTIG…AVDSYIPQPE (195 aa). The interval 19 to 26 is G1; the sequence is GHVDHGKT. Residue 19–26 coordinates GTP; sequence GHVDHGKT. Position 26 (Thr-26) interacts with Mg(2+). A G2 region spans residues 60-64; the sequence is GITIS. The tract at residues 81-84 is G3; that stretch reads DCPG. GTP contacts are provided by residues 81–85 and 136–139; these read DCPGH and NKCD. The tract at residues 136 to 139 is G4; that stretch reads NKCD. The G5 stretch occupies residues 174 to 176; sequence SAV.

The protein belongs to the TRAFAC class translation factor GTPase superfamily. Classic translation factor GTPase family. EF-Tu/EF-1A subfamily. In terms of assembly, monomer.

It is found in the cytoplasm. It catalyses the reaction GTP + H2O = GDP + phosphate + H(+). GTP hydrolase that promotes the GTP-dependent binding of aminoacyl-tRNA to the A-site of ribosomes during protein biosynthesis. The chain is Elongation factor Tu from Akkermansia muciniphila (strain ATCC BAA-835 / DSM 22959 / JCM 33894 / BCRC 81048 / CCUG 64013 / CIP 107961 / Muc).